A 730-amino-acid polypeptide reads, in one-letter code: Exostosin-1a (730 aa).

Residues 1–6 lie on the Cytoplasmic side of the membrane; sequence MQAKKR. Residues 7–27 traverse the membrane as a helical; Signal-anchor for type II membrane protein segment; sequence YLILFSAGVCLILLFYLQGPA. Topologically, residues 28–730 are lumenal; sequence SRRTPKRGDD…RKKYRDIERL (703 aa). Asparagine 314 is a glycosylation site (N-linked (GlcNAc...) asparagine). The UDP-N-acetyl-alpha-D-glucosamine site is built by arginine 533, aspartate 549, glutamate 550, aspartate 551, glutamate 637, aspartate 638, and arginine 685. Aspartate 551 provides a ligand contact to Mn(2+). An intrachain disulfide couples cysteine 636 to cysteine 688. Aspartate 638 is an active-site residue.

It belongs to the glycosyltransferase 47 family. Mn(2+) serves as cofactor.

The protein localises to the endoplasmic reticulum membrane. The catalysed reaction is 3-O-{[(1-&gt;4)-beta-D-GlcA-(1-&gt;4)-alpha-D-GlcNAc](n)-(1-&gt;4)-beta-D-GlcA-(1-&gt;3)-beta-D-Gal-(1-&gt;3)-beta-D-Gal-(1-&gt;4)-beta-D-Xyl}-L-seryl-[protein] + UDP-N-acetyl-alpha-D-glucosamine = 3-O-{alpha-D-GlcNAc-[(1-&gt;4)-beta-D-GlcA-(1-&gt;4)-alpha-D-GlcNAc](n)-(1-&gt;4)-beta-D-GlcA-(1-&gt;3)-beta-D-Gal-(1-&gt;3)-beta-D-Gal-(1-&gt;4)-beta-D-Xyl}-L-seryl-[protein] + UDP + H(+). The enzyme catalyses 3-O-{alpha-D-GlcNAc-[(1-&gt;4)-beta-D-GlcA-(1-&gt;4)-alpha-D-GlcNAc](n)-(1-&gt;4)-beta-D-GlcA-(1-&gt;3)-beta-D-Gal-(1-&gt;3)-beta-D-Gal-(1-&gt;4)-beta-D-Xyl}-L-seryl-[protein] + UDP-alpha-D-glucuronate = 3-O-{[(1-&gt;4)-beta-D-GlcA-(1-&gt;4)-alpha-D-GlcNAc](n+1)-(1-&gt;4)-beta-D-GlcA-(1-&gt;3)-beta-D-Gal-(1-&gt;3)-beta-D-Gal-(1-&gt;4)-beta-D-Xyl}-L-seryl-[protein] + UDP + H(+). Its pathway is protein modification; protein glycosylation. Functionally, glycosyltransferase required for the biosynthesis of heparan-sulfate. This Danio rerio (Zebrafish) protein is Exostosin-1a (ext1a).